The following is a 129-amino-acid chain: MKKLGILNRDIARVLASLGHTDQIVIADCGLPIPSNVECIDLSIRLGVPNFVDVLTEVLADMEVELMMAATEVRTESPSIHQELENRQISIRYLPHDELKAETSKAKAIIRTGECAPYANVILRAGVIF.

H20 serves as the catalytic Proton donor. Substrate is bound by residues D28, H96, and 118-120; that span reads YAN.

It belongs to the RbsD / FucU family. RbsD subfamily. As to quaternary structure, homodecamer.

The protein localises to the cytoplasm. The catalysed reaction is beta-D-ribopyranose = beta-D-ribofuranose. It functions in the pathway carbohydrate metabolism; D-ribose degradation; D-ribose 5-phosphate from beta-D-ribopyranose: step 1/2. Functionally, catalyzes the interconversion of beta-pyran and beta-furan forms of D-ribose. The protein is D-ribose pyranase of Shouchella clausii (strain KSM-K16) (Alkalihalobacillus clausii).